The following is a 307-amino-acid chain: Homoserine O-acetyltransferase (307 aa).

Cys142 (acyl-thioester intermediate) is an active-site residue. Residues Lys163 and Ser192 each coordinate substrate. His235 (proton acceptor) is an active-site residue. The active site involves Glu237. Arg249 lines the substrate pocket.

It belongs to the MetA family.

It is found in the cytoplasm. The enzyme catalyses L-homoserine + acetyl-CoA = O-acetyl-L-homoserine + CoA. It functions in the pathway amino-acid biosynthesis; L-methionine biosynthesis via de novo pathway; O-acetyl-L-homoserine from L-homoserine: step 1/1. Its function is as follows. Transfers an acetyl group from acetyl-CoA to L-homoserine, forming acetyl-L-homoserine. This chain is Homoserine O-acetyltransferase, found in Desulfitobacterium hafniense (strain Y51).